We begin with the raw amino-acid sequence, 143 residues long: Large ribosomal subunit protein uL11 (143 aa).

This sequence belongs to the universal ribosomal protein uL11 family. In terms of assembly, part of the ribosomal stalk of the 50S ribosomal subunit. Interacts with L10 and the large rRNA to form the base of the stalk. L10 forms an elongated spine to which L12 dimers bind in a sequential fashion forming a multimeric L10(L12)X complex. Post-translationally, one or more lysine residues are methylated.

In terms of biological role, forms part of the ribosomal stalk which helps the ribosome interact with GTP-bound translation factors. The polypeptide is Large ribosomal subunit protein uL11 (Albidiferax ferrireducens (strain ATCC BAA-621 / DSM 15236 / T118) (Rhodoferax ferrireducens)).